The chain runs to 443 residues: Na(+)-translocating NADH-quinone reductase subunit A (443 aa).

This sequence belongs to the NqrA family. Composed of six subunits; NqrA, NqrB, NqrC, NqrD, NqrE and NqrF.

The catalysed reaction is a ubiquinone + n Na(+)(in) + NADH + H(+) = a ubiquinol + n Na(+)(out) + NAD(+). Functionally, NQR complex catalyzes the reduction of ubiquinone-1 to ubiquinol by two successive reactions, coupled with the transport of Na(+) ions from the cytoplasm to the periplasm. NqrA to NqrE are probably involved in the second step, the conversion of ubisemiquinone to ubiquinol. The chain is Na(+)-translocating NADH-quinone reductase subunit A from Actinobacillus succinogenes (strain ATCC 55618 / DSM 22257 / CCUG 43843 / 130Z).